A 281-amino-acid polypeptide reads, in one-letter code: Glycerol uptake facilitator protein (281 aa).

At 1-5 (MSQTS) the chain is on the cytoplasmic side. A helical membrane pass occupies residues 6 to 34 (TLKGQCIAEFLGTGLLIFFGVGCVAALKV). Over 35-39 (AGASF) the chain is Periplasmic. The chain crosses the membrane as a helical span at residues 40-60 (GQWEISVIWGLGVAMAIYLTA). At 61-63 (GVS) the chain is on the cytoplasmic side. Residues 64 to 67 (GAHL) lie within the membrane without spanning it. The NPA 1 signature appears at 68–70 (NPA). Positions 68 to 78 (NPAVTIALWLF) form an intramembrane region, helical. Residues 79–84 (ACFDKR) are Cytoplasmic-facing. A helical membrane pass occupies residues 85-108 (KVIPFIVSQVAGAFCAAALVYGLY). Residues 109 to 143 (YNLFFDFEQTHHIVRGSVESVDLAGTFSTYPNPHI) are Periplasmic-facing. Residues 144-169 (NFVQAFAVEMVITAILMGLILALTDD) form a helical membrane-spanning segment. At 170–177 (GNGVPRGP) the chain is on the cytoplasmic side. A helical transmembrane segment spans residues 178–194 (LAPLLIGLLIAVIGASM). Residues 195–198 (GPLT) lie on the Periplasmic side of the membrane. An intramembrane segment occupies 199-202 (GFAM). Residues 203–205 (NPA) carry the NPA 2 motif. The helical intramembrane region spans 203–216 (NPARDFGPKVFAWL). Over 217 to 231 (AGWGNVAFTGGRDIP) the chain is Periplasmic. The chain crosses the membrane as a helical span at residues 232–254 (YFLVPLFGPIVGAIVGAFAYRKL). Over 255 to 281 (IGRHLPCDICVVEEKETTTPSEQKASL) the chain is Cytoplasmic.

It belongs to the MIP/aquaporin (TC 1.A.8) family. Homotetramer.

The protein localises to the cell inner membrane. It carries out the reaction glycerol(in) = glycerol(out). Its function is as follows. Mediates glycerol diffusion across the cytoplasmic membrane via a pore-type mechanism. This chain is Glycerol uptake facilitator protein (glpF), found in Escherichia coli O157:H7.